A 286-amino-acid polypeptide reads, in one-letter code: Putative cyclin-H (286 aa).

The Cyclin N-terminal domain occupies 79–148; that stretch reads AIIYIKRFYL…ILESLNFNLI (70 aa). The tract at residues 235–286 is disordered; it reads NNNNNNNNNNNNNNNNNNNNNNNNNNNNNNNNNNNNNNNNNNNNNNNNNLLL.

The protein belongs to the cyclin family. Cyclin C subfamily.

The protein localises to the nucleus. In terms of biological role, may regulate cdk7 involved in transcription regulation and cell cycle progression. In Dictyostelium discoideum (Social amoeba), this protein is Putative cyclin-H (cycH).